Here is a 343-residue protein sequence, read N- to C-terminus: Protein RecA (343 aa).

64–71 (GPESSGKT) is a binding site for ATP.

It belongs to the RecA family.

The protein resides in the cytoplasm. Can catalyze the hydrolysis of ATP in the presence of single-stranded DNA, the ATP-dependent uptake of single-stranded DNA by duplex DNA, and the ATP-dependent hybridization of homologous single-stranded DNAs. It interacts with LexA causing its activation and leading to its autocatalytic cleavage. In Bacillus mycoides (strain KBAB4) (Bacillus weihenstephanensis), this protein is Protein RecA.